Consider the following 111-residue polypeptide: Small ribosomal subunit protein mS38 (111 aa).

Residues 82-99 show a composition bias toward basic residues; it reads RKRKKKMKKHKLRKRRKR. The disordered stretch occupies residues 82–111; the sequence is RKRKKKMKKHKLRKRRKREKAERRKLSQGR. The segment covering 100 to 111 has biased composition (basic and acidic residues); it reads EKAERRKLSQGR.

This sequence belongs to the mitochondrion-specific ribosomal protein mS38 family. Component of the mitochondrial small ribosomal subunit (mt-SSU). Mature yeast 74S mitochondrial ribosomes consist of a small (37S) and a large (54S) subunit. The 37S small subunit contains a 15S ribosomal RNA (15S mt-rRNA) and 34 different proteins. The 54S large subunit contains a 21S rRNA (21S mt-rRNA) and 46 different proteins.

The protein resides in the mitochondrion. Its subcellular location is the mitochondrion inner membrane. In terms of biological role, component of the mitochondrial ribosome (mitoribosome), a dedicated translation machinery responsible for the synthesis of mitochondrial genome-encoded proteins, including at least some of the essential transmembrane subunits of the mitochondrial respiratory chain. The mitoribosomes are attached to the mitochondrial inner membrane and translation products are cotranslationally integrated into the membrane. mS38 is also involved in the splicing of the COX1 mRNA. This is Small ribosomal subunit protein mS38 (QRI5) from Saccharomyces cerevisiae (strain ATCC 204508 / S288c) (Baker's yeast).